The primary structure comprises 279 residues: Indole-3-glycerol phosphate synthase (279 aa).

It belongs to the TrpC family.

It catalyses the reaction 1-(2-carboxyphenylamino)-1-deoxy-D-ribulose 5-phosphate + H(+) = (1S,2R)-1-C-(indol-3-yl)glycerol 3-phosphate + CO2 + H2O. The protein operates within amino-acid biosynthesis; L-tryptophan biosynthesis; L-tryptophan from chorismate: step 4/5. This chain is Indole-3-glycerol phosphate synthase, found in Ectopseudomonas mendocina (strain ymp) (Pseudomonas mendocina).